A 234-amino-acid chain; its full sequence is Nuclear ubiquitous casein and cyclin-dependent kinase substrate 1 (234 aa).

The interval 1–234 (MSRPVRNRKV…SEDEASSGED (234 aa)) is disordered. Tyrosine 13 carries the post-translational modification Phosphotyrosine. A phosphoserine mark is found at serine 14 and serine 19. Phosphotyrosine is present on tyrosine 26. Residues 35–51 (KKIRSSPREAKNKRRSG) show a composition bias toward basic residues. Serine 54, serine 58, serine 61, serine 73, serine 75, and serine 79 each carry phosphoserine. Residues 64-77 (KDVKTKKDDSHSAE) show a composition bias toward basic and acidic residues. Low complexity predominate over residues 91 to 100 (QQRQAASKAA). Acidic residues predominate over residues 111–124 (VGSEEEPEEDDEAP). Serine 113, serine 130, serine 132, and serine 144 each carry phosphoserine. A compositionally biased stretch (acidic residues) spans 132–145 (SDEDFLMEDDDDSD). Over residues 149-174 (SKKKNKKMVKKSKPERKEKKMPKPRL) the composition is skewed to basic residues. Threonine 179 is modified (phosphothreonine). Residue serine 181 is modified to Phosphoserine. The span at 185 to 199 (GKAKVGRPTASKKSK) shows a compositional bias: basic residues. Threonine 202 is subject to Phosphothreonine. 4 positions are modified to phosphoserine: serine 204, serine 214, serine 225, and serine 231. Residues 223–234 (EGSEDEASSGED) are compositionally biased toward acidic residues.

Does not interact with RAD51. Post-translationally, phosphorylated in an ATM-dependent manner in response to DNA damage. Phosphorylated by CDK1 and casein kinase.

It is found in the nucleus. It localises to the chromosome. Chromatin-associated protein involved in DNA repair by promoting homologous recombination (HR). Binds double-stranded DNA (dsDNA) and secondary DNA structures, such as D-loop structures, but with less affinity than RAD51AP1. The chain is Nuclear ubiquitous casein and cyclin-dependent kinase substrate 1 (Nucks1) from Mus musculus (Mouse).